The primary structure comprises 140 residues: Putative pre-16S rRNA nuclease (140 aa).

The protein belongs to the YqgF nuclease family.

It localises to the cytoplasm. Functionally, could be a nuclease involved in processing of the 5'-end of pre-16S rRNA. The protein is Putative pre-16S rRNA nuclease of Halothermothrix orenii (strain H 168 / OCM 544 / DSM 9562).